We begin with the raw amino-acid sequence, 569 residues long: Protein THEMIS3 (569 aa).

2 CABIT regions span residues 1 to 254 and 255 to 523; these read MEQT…ARLD and RKPR…EERS.

Belongs to the themis family. In terms of tissue distribution, specifically expressed in the intestine.

The chain is Protein THEMIS3 (Themis3) from Mus musculus (Mouse).